The chain runs to 208 residues: FMN-dependent NADH:quinone oxidoreductase (208 aa).

FMN contacts are provided by residues 17–19 (SNS), 99–102 (MWNL), and 143–146 (SRGG).

This sequence belongs to the azoreductase type 1 family. Homodimer. FMN serves as cofactor.

It carries out the reaction 2 a quinone + NADH + H(+) = 2 a 1,4-benzosemiquinone + NAD(+). It catalyses the reaction N,N-dimethyl-1,4-phenylenediamine + anthranilate + 2 NAD(+) = 2-(4-dimethylaminophenyl)diazenylbenzoate + 2 NADH + 2 H(+). In terms of biological role, quinone reductase that provides resistance to thiol-specific stress caused by electrophilic quinones. Also exhibits azoreductase activity. Catalyzes the reductive cleavage of the azo bond in aromatic azo compounds to the corresponding amines. In Staphylococcus carnosus (strain TM300), this protein is FMN-dependent NADH:quinone oxidoreductase.